The following is a 323-amino-acid chain: Zinc finger protein 784 (323 aa).

Positions 1–26 (MAAARPEAQSRSSPTPESRSQEPLDL) are disordered. A compositionally biased stretch (polar residues) spans 9 to 18 (QSRSSPTPES). S13 is subject to Phosphoserine. 6 consecutive C2H2-type zinc fingers follow at residues 65 to 87 (FHCA…EHGH), 101 to 123 (SRCH…YSLH), 129 to 151 (YRCA…QHRH), 196 to 218 (FACR…ERVH), 224 to 246 (YHCG…ARIH), and 252 to 274 (FRCT…QRTH). Positions 269-323 (KHQRTHFHGPGPGLGDSGGQLGSSAAEGSGSGCGVGDPAEEGRGETAKVKVEADQ) are disordered. Over residues 278-289 (PGPGLGDSGGQL) the composition is skewed to gly residues. Residues 308-323 (EEGRGETAKVKVEADQ) show a composition bias toward basic and acidic residues. K318 is covalently cross-linked (Glycyl lysine isopeptide (Lys-Gly) (interchain with G-Cter in SUMO2)).

This sequence belongs to the krueppel C2H2-type zinc-finger protein family.

Its subcellular location is the nucleus. May be involved in transcriptional regulation. The protein is Zinc finger protein 784 (ZNF784) of Homo sapiens (Human).